We begin with the raw amino-acid sequence, 254 residues long: DNA repair protein RecO (254 aa).

The protein belongs to the RecO family.

Involved in DNA repair and RecF pathway recombination. In Gluconacetobacter diazotrophicus (strain ATCC 49037 / DSM 5601 / CCUG 37298 / CIP 103539 / LMG 7603 / PAl5), this protein is DNA repair protein RecO.